Reading from the N-terminus, the 894-residue chain is Transcriptional activator/repressor GIS1 (894 aa).

One can recognise a JmjN domain in the interval 12–53; the sequence is VPVFKPSMMEFANFQYFIDEITKFGIENGIVKVIPPKEWLEL. Ser-70 carries the phosphoserine modification. Residues 90–110 adopt a coiled-coil conformation; it reads ENEYDNKSYNLTQWKNLAESL. Positions 170–324 constitute a JmjC domain; it reads PYDLTLWNLN…VRKQPLKCGC (155 aa). The Bipartite nuclear localization signal signature appears at 316 to 332; sequence RKQPLKCGCGNKKEERK. Positions 324–355 are disordered; the sequence is CGNKKEERKSGPFSNLSYDSNESEQRGSITDN. Residues 335–354 show a composition bias toward polar residues; sequence PFSNLSYDSNESEQRGSITD. Ser-343 is modified (phosphoserine). Residues 361–385 adopt a coiled-coil conformation; the sequence is QKVRSFDELLNHSSQELQNLEDNKN. Low complexity predominate over residues 521-554; sequence NISSTNNSANNSSSNNNVSTVPSSMMHSSTLNGT. The segment at 521-558 is disordered; sequence NISSTNNSANNSSSNNNVSTVPSSMMHSSTLNGTSGLG. 5 positions are modified to phosphoserine: Ser-690, Ser-694, Ser-696, Ser-734, and Ser-747. A compositionally biased stretch (low complexity) spans 756–768; that stretch reads LNGNDNSNLDSNN. Positions 756–810 are disordered; that stretch reads LNGNDNSNLDSNNFDYSFTGNKQESNPSILNNNTNNNDNYRTSSMNNNGNNYQAH. Composition is skewed to polar residues over residues 769–785 and 795–810; these read FDYSFTGNKQESNPSIL and YRTSSMNNNGNNYQAH. A C2H2-type 1 zinc finger spans residues 828-851; the sequence is YICRECNRQFSSGHHLTRHKKSVH. A C2H2-type 2; atypical zinc finger spans residues 857–882; sequence HSCPRCGKRFKRRDHVLQHLNKKIPC.

Its subcellular location is the nucleus. In terms of biological role, transcription factor involved in the regulation of gene expression upon nutrient starvation. Recognizes and binds to the post-diauxic-shift element 5'-T[AT]AGGGAT-3' in the promoter region. Can act as a transcriptional activator (e.g. of stress genes like SSA3, HSP12 and HSP26) as well as a repressor (e.g. of pyrophosphate phosphatase DPP1). GIS1 also acts as a DNA damage-responsive transcriptional repressor of photolyase PHR1. This chain is Transcriptional activator/repressor GIS1 (GIS1), found in Saccharomyces cerevisiae (strain ATCC 204508 / S288c) (Baker's yeast).